Reading from the N-terminus, the 385-residue chain is FK506-binding protein 5 (385 aa).

Positions 26–115 (TNFVSVHYDA…RFEVELIGFW (90 aa)) constitute a PPIase FKBP-type domain. 3 TPR repeats span residues 128–161 (AEKK…IQDL), 177–210 (VSIQ…DMTK), and 211–244 (IKAY…AIGL).

The enzyme catalyses [protein]-peptidylproline (omega=180) = [protein]-peptidylproline (omega=0). Its activity is regulated as follows. Inhibited by both FK506 and rapamycin. PPIases accelerate the folding of proteins. It catalyzes the cis-trans isomerization of proline imidic peptide bonds in oligopeptides. The chain is FK506-binding protein 5 (FKBP5) from Rhizopus delemar (strain RA 99-880 / ATCC MYA-4621 / FGSC 9543 / NRRL 43880) (Mucormycosis agent).